Here is a 244-residue protein sequence, read N- to C-terminus: DNA repair protein RecO (244 aa).

This sequence belongs to the RecO family.

In terms of biological role, involved in DNA repair and RecF pathway recombination. The chain is DNA repair protein RecO from Caldicellulosiruptor saccharolyticus (strain ATCC 43494 / DSM 8903 / Tp8T 6331).